The primary structure comprises 500 residues: MAMHPRKDWYELTRATNWTPSYVTEEQLFPERMSGHMGIPLEKWESYDEPYKTSYPEYVSIQREKDAGAYSVKAALERAKIYENSDPGWISTLKSHYGAIAVGEYAAVTGEGRMARFSKAPGNRNMATFGMMDELRHGQLQLFFPHEYCKKDRQFDWAWRAYHSNEWAAIAAKHFFDDIITGRDAISVAIMLTFSFETGFTNMQFLGLAADAAEAGDYTFANLISSIQTDESRHAQQGGPALQLLIENGKREEAQKKVDMAIWRAWRLFAVLTGPVMDYYTPLEDRSQSFKEFMYEWIIGQFERSLIDLGLDKPWYWDLFLKDIDELHHSYHMGVWYWRTTAWWNPAAGVTPEERDWLEEKYPGWNKRWGRCWDVITENVLNDRMDLVSPETLPSVCNMSQIPLVGVPGDDWNIEVFSLEHNGRLYHFGSEVDRWVFQQDPVQYQNHMNIVDRFLAGQIQPMTLEGALKYMGFQSIEEMGKDAHDFAWADKCKPAMKKSA.

Fe cation contacts are provided by glutamate 104, glutamate 134, histidine 137, glutamate 197, glutamate 231, and histidine 234.

Belongs to the TmoA/XamoA family. The alkene monooxygenase multicomponent enzyme system is composed of an electron transfer component and a monooxygenase component interacting with the effector protein TmoD. The electron transfer component is composed of a ferredoxin reductase (TmoF) and a ferredoxin (TmoC), and the monooxygenase component is formed by a heterohexamer (dimer of heterotrimers) of two alpha subunits (TmoA), two beta subunits (TmoE) and two gamma subunits (TmoB). Fe(2+) is required as a cofactor.

It catalyses the reaction toluene + NADH + O2 + H(+) = 4-methylphenol + NAD(+) + H2O. The protein operates within xenobiotic degradation; toluene degradation. Its activity is regulated as follows. Inhibited by Zn(2+) and Cu(2+). In terms of biological role, component of the toluene-4-monooxygenase multicomponent enzyme system which catalyzes the O2- and NADH-dependent hydroxylation of toluene to form p-cresol. Also able to convert benzene to phenol, catechol, and 1,2,3-trihydroxybenzene by successive hydroxylations. This is Toluene-4-monooxygenase system, hydroxylase component subunit alpha from Ectopseudomonas mendocina (Pseudomonas mendocina).